We begin with the raw amino-acid sequence, 207 residues long: Putative tributyltin chloride resistance protein (207 aa).

Residues 37-122 (NLPIELALMP…YHAIAALNLG (86 aa)) form a slt-type domain region. Glu-49 is a catalytic residue.

The protein belongs to the transglycosylase Slt family.

This chain is Putative tributyltin chloride resistance protein (tbtA), found in Alteromonas sp. (strain M-1).